Consider the following 320-residue polypeptide: Cytochrome f (320 aa).

The signal sequence occupies residues 1–35 (MQNRNTFSWVKEEMTRFISVSIMIYVITRTSISNA). Heme contacts are provided by tyrosine 36, cysteine 56, cysteine 59, and histidine 60. Residues 286-306 (VQGLLFFLASVILAQIFLVLK) form a helical membrane-spanning segment.

Belongs to the cytochrome f family. In terms of assembly, the 4 large subunits of the cytochrome b6-f complex are cytochrome b6, subunit IV (17 kDa polypeptide, petD), cytochrome f and the Rieske protein, while the 4 small subunits are PetG, PetL, PetM and PetN. The complex functions as a dimer. Requires heme as cofactor.

It is found in the plastid. It localises to the chloroplast thylakoid membrane. In terms of biological role, component of the cytochrome b6-f complex, which mediates electron transfer between photosystem II (PSII) and photosystem I (PSI), cyclic electron flow around PSI, and state transitions. The polypeptide is Cytochrome f (Calycanthus floridus var. glaucus (Eastern sweetshrub)).